The sequence spans 213 residues: Viral dihydrofolate reductase (213 aa).

The DHFR domain maps to 4-184; that stretch reads LLNCIVAVDQ…IKYKFEVYEK (181 aa). NADP(+) contacts are provided by residues A10 and 16–22; that span reads GIGKKGH. 31 to 36 contributes to the substrate binding site; sequence DFKYFQ. 54-56 contributes to the NADP(+) binding site; that stretch reads KNT. R70 is a binding site for substrate. Residues 76–78 and 116–123 each bind NADP(+); these read SKK and GGSSVYKD.

The protein belongs to the dihydrofolate reductase family.

It catalyses the reaction (6S)-5,6,7,8-tetrahydrofolate + NADP(+) = 7,8-dihydrofolate + NADPH + H(+). The protein operates within cofactor biosynthesis; tetrahydrofolate biosynthesis; 5,6,7,8-tetrahydrofolate from 7,8-dihydrofolate: step 1/1. Key enzyme in folate metabolism. Catalyzes an essential reaction for de novo glycine and purine synthesis, and for DNA precursor synthesis. The polypeptide is Viral dihydrofolate reductase (DHFR) (Saimiri sciureus (Common squirrel monkey)).